The chain runs to 343 residues: S-adenosylmethionine:tRNA ribosyltransferase-isomerase (343 aa).

Belongs to the QueA family. In terms of assembly, monomer.

It localises to the cytoplasm. It carries out the reaction 7-aminomethyl-7-carbaguanosine(34) in tRNA + S-adenosyl-L-methionine = epoxyqueuosine(34) in tRNA + adenine + L-methionine + 2 H(+). It participates in tRNA modification; tRNA-queuosine biosynthesis. In terms of biological role, transfers and isomerizes the ribose moiety from AdoMet to the 7-aminomethyl group of 7-deazaguanine (preQ1-tRNA) to give epoxyqueuosine (oQ-tRNA). This chain is S-adenosylmethionine:tRNA ribosyltransferase-isomerase, found in Latilactobacillus sakei subsp. sakei (strain 23K) (Lactobacillus sakei subsp. sakei).